Reading from the N-terminus, the 31-residue chain is Dermaseptin-DI3 (31 aa).

It belongs to the frog skin active peptide (FSAP) family. Dermaseptin subfamily. As to expression, expressed by the skin glands.

Its subcellular location is the secreted. In terms of biological role, antibacterial activity against Gram-positive bacteria S.aureus and E.faecalis, and Gram-negative bacteria P.aeruginosa and E.coli. This chain is Dermaseptin-DI3, found in Phyllomedusa distincta (Monkey frog).